The following is a 101-amino-acid chain: Interleukin-8 (101 aa).

Residues 1-22 (MTSKLAVALLAAFLLSAALCEG) form the signal peptide. Arg27 is modified (citrulline). Intrachain disulfides connect Cys34–Cys61 and Cys36–Cys77.

It belongs to the intercrine alpha (chemokine CxC) family. In terms of assembly, homodimer. Interacts with TNFAIP6 (via Link domain); this interaction interferes with chemokine binding to glycosaminoglycans. Post-translationally, citrullination at Arg-27 prevents proteolysis, and dampens tissue inflammation, it also enhances leukocytosis, possibly through impaired chemokine clearance from the blood circulation.

The protein localises to the secreted. Its function is as follows. Chemotactic factor that mediates inflammatory response by attracting neutrophils, basophils, and T-cells to clear pathogens and protect the host from infection. Also plays an important role in neutrophil activation. Released in response to an inflammatory stimulus, exerts its effect by binding to the G-protein-coupled receptors CXCR1 and CXCR2, primarily found in neutrophils, monocytes and endothelial cells. G-protein heterotrimer (alpha, beta, gamma subunits) constitutively binds to CXCR1/CXCR2 receptor and activation by IL8 leads to beta and gamma subunits release from Galpha (GNAI2 in neutrophils) and activation of several downstream signaling pathways including PI3K and MAPK pathways. The protein is Interleukin-8 (CXCL8) of Macaca mulatta (Rhesus macaque).